A 448-amino-acid chain; its full sequence is Probable D-serine dehydratase (448 aa).

At Lys119 the chain carries N6-(pyridoxal phosphate)lysine.

Belongs to the serine/threonine dehydratase family. DsdA subfamily. Requires pyridoxal 5'-phosphate as cofactor.

It catalyses the reaction D-serine = pyruvate + NH4(+). In Chromobacterium violaceum (strain ATCC 12472 / DSM 30191 / JCM 1249 / CCUG 213 / NBRC 12614 / NCIMB 9131 / NCTC 9757 / MK), this protein is Probable D-serine dehydratase.